The chain runs to 642 residues: Threonine--tRNA ligase (642 aa).

The 61-residue stretch at M1–T61 folds into the TGS domain. Positions D243–P534 are catalytic. Positions 334, 385, and 511 each coordinate Zn(2+).

It belongs to the class-II aminoacyl-tRNA synthetase family. As to quaternary structure, homodimer. Zn(2+) is required as a cofactor.

It is found in the cytoplasm. The catalysed reaction is tRNA(Thr) + L-threonine + ATP = L-threonyl-tRNA(Thr) + AMP + diphosphate + H(+). Catalyzes the attachment of threonine to tRNA(Thr) in a two-step reaction: L-threonine is first activated by ATP to form Thr-AMP and then transferred to the acceptor end of tRNA(Thr). Also edits incorrectly charged L-seryl-tRNA(Thr). This is Threonine--tRNA ligase from Shewanella putrefaciens (strain CN-32 / ATCC BAA-453).